Reading from the N-terminus, the 148-residue chain is uncharacterized protein (148 aa).

CBS domains follow at residues 8–68 and 74–130; these read MTAD…PNSQ and MTEK…ERAG. Positions 127–148 are disordered; the sequence is ERAGSALSDISEGDNREEGFFH. Over residues 139–148 the composition is skewed to basic and acidic residues; that stretch reads GDNREEGFFH.

This is an uncharacterized protein from Bacillus subtilis (strain 168).